The primary structure comprises 137 residues: Ribosomal RNA large subunit methyltransferase H (137 aa).

S-adenosyl-L-methionine contacts are provided by residues Leu-56, Gly-85, and 104–109 (LSPLTF).

This sequence belongs to the RNA methyltransferase RlmH family. In terms of assembly, homodimer.

It is found in the cytoplasm. The catalysed reaction is pseudouridine(1915) in 23S rRNA + S-adenosyl-L-methionine = N(3)-methylpseudouridine(1915) in 23S rRNA + S-adenosyl-L-homocysteine + H(+). In terms of biological role, specifically methylates the pseudouridine at position 1915 (m3Psi1915) in 23S rRNA. The sequence is that of Ribosomal RNA large subunit methyltransferase H from Prochlorococcus marinus subsp. pastoris (strain CCMP1986 / NIES-2087 / MED4).